Reading from the N-terminus, the 336-residue chain is MVQKEMINKKISQDNSFIQNNNLADFDFLDAKKNSEIKTVSTGSLHLDEALGTGGLPLGRIVELYGNESSGKTTVALHAVASFQKAGKVACYIDAEGALDLSYAKAIGIDLGKLLVAHPKHGENAFALMESLIKTNKVALIVVDSVAALIPKQELEGNMDDQTIGLHARMMSKGLRRVQSLLPESDTCLLFINQLREKPGVMFGNGEVTTGGRALKFYASMRMEAKRSELLKDRFGNYVGIKSKLTVSKNKVARPFGVAFLEIMFNRGIVYEHEVIELALKHNVVVRSDNAYSFKSQNIAIGKEKLFSVLAEKPELFEQIKQLTIKQIHSPPPPAS.

Glycine 66–threonine 73 contributes to the ATP binding site.

The protein belongs to the RecA family.

The protein resides in the cytoplasm. Its function is as follows. Can catalyze the hydrolysis of ATP in the presence of single-stranded DNA, the ATP-dependent uptake of single-stranded DNA by duplex DNA, and the ATP-dependent hybridization of homologous single-stranded DNAs. It interacts with LexA causing its activation and leading to its autocatalytic cleavage. The protein is Protein RecA of Mycoplasma pneumoniae (strain ATCC 29342 / M129 / Subtype 1) (Mycoplasmoides pneumoniae).